The chain runs to 268 residues: WUSCHEL-related homeobox 11 (268 aa).

A disordered region spans residues 1–35; sequence MDQEQTPHSPTRHSRSPPSSASGSTSAEPVRSRWS. Low complexity predominate over residues 16–27; it reads SPPSSASGSTSA. Residues 29 to 93 constitute a DNA-binding region (homeobox; WUS-type); it reads PVRSRWSPKP…NRRSRSRRRQ (65 aa).

The protein belongs to the WUS homeobox family.

Its subcellular location is the nucleus. Transcription factor which may be involved in developmental processes. This is WUSCHEL-related homeobox 11 (WOX11) from Arabidopsis thaliana (Mouse-ear cress).